A 740-amino-acid chain; its full sequence is DNA-directed RNA polymerase subunit beta' (740 aa).

Positions 65, 67, 103, and 106 each coordinate Zn(2+). Residues D539, D541, and D543 each contribute to the Mg(2+) site.

It belongs to the RNA polymerase beta' chain family. RpoC1 subfamily. In terms of assembly, in plastids the minimal PEP RNA polymerase catalytic core is composed of four subunits: alpha, beta, beta', and beta''. When a (nuclear-encoded) sigma factor is associated with the core the holoenzyme is formed, which can initiate transcription. Mg(2+) is required as a cofactor. Requires Zn(2+) as cofactor.

It localises to the plastid. Its subcellular location is the chloroplast. It carries out the reaction RNA(n) + a ribonucleoside 5'-triphosphate = RNA(n+1) + diphosphate. In terms of biological role, DNA-dependent RNA polymerase catalyzes the transcription of DNA into RNA using the four ribonucleoside triphosphates as substrates. The chain is DNA-directed RNA polymerase subunit beta' from Ostreococcus tauri.